A 91-amino-acid chain; its full sequence is MEKLRMNVQGRVQGVGFRYMTKMVADQLGVTGSVRNEDDGSVSITAIAPEDIMETFIKKIKDSPSPAGRVTYVDIQEDPLLEETEQFKVIQ.

The 89-residue stretch at 3-91 (KLRMNVQGRV…EETEQFKVIQ (89 aa)) folds into the Acylphosphatase-like domain. Catalysis depends on residues R18 and N36.

Belongs to the acylphosphatase family.

It catalyses the reaction an acyl phosphate + H2O = a carboxylate + phosphate + H(+). The sequence is that of Acylphosphatase (acyP) from Enterococcus faecalis (strain ATCC 700802 / V583).